The sequence spans 226 residues: ATP-dependent dethiobiotin synthetase BioD (226 aa).

13–18 is an ATP binding site; that stretch reads DVGKTL. A Mg(2+)-binding site is contributed by T17. Residue K38 is part of the active site. ATP contacts are provided by residues D55, 117–120, 177–178, 206–208, and E213; these read EGAG, NR, and PFV. D55 and E117 together coordinate Mg(2+).

This sequence belongs to the dethiobiotin synthetase family. Homodimer. It depends on Mg(2+) as a cofactor.

The protein resides in the cytoplasm. The catalysed reaction is (7R,8S)-7,8-diammoniononanoate + CO2 + ATP = (4R,5S)-dethiobiotin + ADP + phosphate + 3 H(+). The protein operates within cofactor biosynthesis; biotin biosynthesis; biotin from 7,8-diaminononanoate: step 1/2. Its function is as follows. Catalyzes a mechanistically unusual reaction, the ATP-dependent insertion of CO2 between the N7 and N8 nitrogen atoms of 7,8-diaminopelargonic acid (DAPA, also called 7,8-diammoniononanoate) to form a ureido ring. The polypeptide is ATP-dependent dethiobiotin synthetase BioD (Aeromonas salmonicida (strain A449)).